Consider the following 235-residue polypeptide: Purine nucleoside phosphorylase DeoD-type (235 aa).

His-4 is a binding site for a purine D-ribonucleoside. Phosphate contacts are provided by residues Gly-20, Arg-24, Arg-43, and 87 to 90 (RVGT). A purine D-ribonucleoside contacts are provided by residues Glu-162, 179 to 181 (EME), and 203 to 204 (SD). Asp-204 acts as the Proton donor in catalysis.

It belongs to the PNP/UDP phosphorylase family. In terms of assembly, homohexamer; trimer of homodimers.

It carries out the reaction a purine D-ribonucleoside + phosphate = a purine nucleobase + alpha-D-ribose 1-phosphate. It catalyses the reaction a purine 2'-deoxy-D-ribonucleoside + phosphate = a purine nucleobase + 2-deoxy-alpha-D-ribose 1-phosphate. Its function is as follows. Catalyzes the reversible phosphorolytic breakdown of the N-glycosidic bond in the beta-(deoxy)ribonucleoside molecules, with the formation of the corresponding free purine bases and pentose-1-phosphate. The chain is Purine nucleoside phosphorylase DeoD-type from Bacillus anthracis (strain CDC 684 / NRRL 3495).